The following is a 344-amino-acid chain: Autoinducer 2 import system permease protein LsrC (344 aa).

Transmembrane regions (helical) follow at residues 13–33 (FFAI…YFIL), 38–58 (MIFA…LVML), 69–89 (TVGL…GLAT), 90–110 (AIAF…LLVV), 114–134 (IPAI…MLLW), 155–175 (FIGV…GGWL), 212–232 (LNGM…GFVP), 251–271 (GISL…AFFL), and 283–303 (LPAW…LVLD). The interval 323-344 (QPGNKGSKQVARFPERKSKEVA) is disordered. Basic and acidic residues predominate over residues 335–344 (FPERKSKEVA).

It belongs to the binding-protein-dependent transport system permease family. AraH/RbsC subfamily. As to quaternary structure, the complex is composed of two ATP-binding proteins (LsrA), two transmembrane proteins (LsrC and LsrD) and a solute-binding protein (LsrB).

It is found in the cell inner membrane. Its function is as follows. Part of the ABC transporter complex LsrABCD involved in autoinducer 2 (AI-2) import. Probably responsible for the translocation of the substrate across the membrane. This Klebsiella pneumoniae subsp. pneumoniae (strain ATCC 700721 / MGH 78578) protein is Autoinducer 2 import system permease protein LsrC (lsrC).